The following is a 621-amino-acid chain: 1,4-alpha-glucan branching enzyme GlgB (621 aa).

D302 functions as the Nucleophile in the catalytic mechanism. E355 acts as the Proton donor in catalysis.

This sequence belongs to the glycosyl hydrolase 13 family. GlgB subfamily. Monomer.

The enzyme catalyses Transfers a segment of a (1-&gt;4)-alpha-D-glucan chain to a primary hydroxy group in a similar glucan chain.. It participates in glycan biosynthesis; glycogen biosynthesis. Catalyzes the formation of the alpha-1,6-glucosidic linkages in glycogen by scission of a 1,4-alpha-linked oligosaccharide from growing alpha-1,4-glucan chains and the subsequent attachment of the oligosaccharide to the alpha-1,6 position. In Dechloromonas aromatica (strain RCB), this protein is 1,4-alpha-glucan branching enzyme GlgB.